Reading from the N-terminus, the 373-residue chain is MSDNSKIRVVVGMSGGVDSSVTALLLKEQGYDVIGIFMKNWDDTDEFGVCTATEDYKDVAAVADQIGIPYYSVNFEKEYWDRVFEYFLAEYRAGRTPNPDVMCNKEIKFKAFLDYALTLGADYVATGHYAQVKRDQDGLVHMLRGKDNNKDQTYFLSQLSQEQLQKTMFPLGHLEKPEVRAIAERAGLATAKKKDSTGICFIGEKNFKEFLSQYLPAQPGRMMTLEGRDMGQHAGLMYYTIGQRGGLGIGGQHGGDNEPWFVVGKDLSQNILYVGQGFYHDNLMSTSLDASQVHFTKEMPEEFTMECTAKFRYRQPDSKVTVTVKGDKAVVNFDKPQRAITPGQGVVFYDGDECLGGGLIDRAYKNGQVLQYI.

ATP contacts are provided by residues glycine 12–serine 19 and methionine 38. Residues asparagine 98 to aspartate 100 form an interaction with target base in tRNA region. Cysteine 103 (nucleophile) is an active-site residue. A disulfide bond links cysteine 103 and cysteine 200. Glycine 127 contacts ATP. The interaction with tRNA stretch occupies residues lysine 150 to glutamine 152. The Cysteine persulfide intermediate role is filled by cysteine 200. Residues arginine 312–tyrosine 313 are interaction with tRNA.

Belongs to the MnmA/TRMU family.

Its subcellular location is the cytoplasm. The enzyme catalyses S-sulfanyl-L-cysteinyl-[protein] + uridine(34) in tRNA + AH2 + ATP = 2-thiouridine(34) in tRNA + L-cysteinyl-[protein] + A + AMP + diphosphate + H(+). Its function is as follows. Catalyzes the 2-thiolation of uridine at the wobble position (U34) of tRNA, leading to the formation of s(2)U34. In Streptococcus sanguinis (strain SK36), this protein is tRNA-specific 2-thiouridylase MnmA.